Here is a 206-residue protein sequence, read N- to C-terminus: Superoxide dismutase [Mn] (206 aa).

Mn(2+) is bound by residues His-27, His-82, Asp-168, and His-172.

Belongs to the iron/manganese superoxide dismutase family. In terms of assembly, homodimer. Requires Mn(2+) as cofactor.

It carries out the reaction 2 superoxide + 2 H(+) = H2O2 + O2. In terms of biological role, destroys superoxide anion radicals which are normally produced within the cells and which are toxic to biological systems. This Salmonella typhimurium (strain LT2 / SGSC1412 / ATCC 700720) protein is Superoxide dismutase [Mn] (sodA).